We begin with the raw amino-acid sequence, 199 residues long: Cytochrome c oxidase subunit 2 (199 aa).

Residues 1-13 traverse the membrane as a helical segment; that stretch reads AICSLVLYLLTLM. Over 14–26 the chain is Mitochondrial matrix; sequence LMEKLSSNTVDAQ. The helical transmembrane segment at 27–54 threads the bilayer; sequence EVELIWTILPAIVLILLALPSLQILYMM. The Mitochondrial intermembrane portion of the chain corresponds to 55–199; it reads DEIDEPDLTL…SSLLSISSSL (145 aa). Positions 128, 163, 165, 167, 171, and 174 each coordinate Cu cation. Glutamate 165 lines the Mg(2+) pocket.

Belongs to the cytochrome c oxidase subunit 2 family. As to quaternary structure, component of the cytochrome c oxidase (complex IV, CIV), a multisubunit enzyme composed of 14 subunits. The complex is composed of a catalytic core of 3 subunits MT-CO1, MT-CO2 and MT-CO3, encoded in the mitochondrial DNA, and 11 supernumerary subunits COX4I, COX5A, COX5B, COX6A, COX6B, COX6C, COX7A, COX7B, COX7C, COX8 and NDUFA4, which are encoded in the nuclear genome. The complex exists as a monomer or a dimer and forms supercomplexes (SCs) in the inner mitochondrial membrane with NADH-ubiquinone oxidoreductase (complex I, CI) and ubiquinol-cytochrome c oxidoreductase (cytochrome b-c1 complex, complex III, CIII), resulting in different assemblies (supercomplex SCI(1)III(2)IV(1) and megacomplex MCI(2)III(2)IV(2)). Found in a complex with TMEM177, COA6, COX18, COX20, SCO1 and SCO2. Interacts with TMEM177 in a COX20-dependent manner. Interacts with COX20. Interacts with COX16. Cu cation is required as a cofactor.

It localises to the mitochondrion inner membrane. It carries out the reaction 4 Fe(II)-[cytochrome c] + O2 + 8 H(+)(in) = 4 Fe(III)-[cytochrome c] + 2 H2O + 4 H(+)(out). Its function is as follows. Component of the cytochrome c oxidase, the last enzyme in the mitochondrial electron transport chain which drives oxidative phosphorylation. The respiratory chain contains 3 multisubunit complexes succinate dehydrogenase (complex II, CII), ubiquinol-cytochrome c oxidoreductase (cytochrome b-c1 complex, complex III, CIII) and cytochrome c oxidase (complex IV, CIV), that cooperate to transfer electrons derived from NADH and succinate to molecular oxygen, creating an electrochemical gradient over the inner membrane that drives transmembrane transport and the ATP synthase. Cytochrome c oxidase is the component of the respiratory chain that catalyzes the reduction of oxygen to water. Electrons originating from reduced cytochrome c in the intermembrane space (IMS) are transferred via the dinuclear copper A center (CU(A)) of subunit 2 and heme A of subunit 1 to the active site in subunit 1, a binuclear center (BNC) formed by heme A3 and copper B (CU(B)). The BNC reduces molecular oxygen to 2 water molecules using 4 electrons from cytochrome c in the IMS and 4 protons from the mitochondrial matrix. The polypeptide is Cytochrome c oxidase subunit 2 (MT-CO2) (Casuarius bennetti (Dwarf cassowary)).